The following is a 501-amino-acid chain: Sensor histidine kinase PdtaS (501 aa).

The tract at residues 4–150 (LGDLLAEHTV…HLETAYRLCA (147 aa)) is GAF. The interval 179-291 (DGFIRLDVDG…TEVKRRDRAL (113 aa)) is PAS-like. In terms of domain architecture, Histidine kinase spans 300–495 (EIHHRVKNNL…DVVLRVPVGR (196 aa)). Residue H303 is modified to Phosphohistidine; by autocatalysis.

Autophosphorylated.

It is found in the cytoplasm. It carries out the reaction ATP + protein L-histidine = ADP + protein N-phospho-L-histidine.. Functionally, member of the two-component regulatory system PdtaR/PdtaS. This two-component system plays an essential role in mycobacterial adaptation to poor nutrient conditions. Nutrient deprivation results in increasing intracellular concentrations of cyclic diguanosine monophosphate (c-di-GMP), which binds to the PdtaS sensor and promotes its autophosphorylation, leading to the activation of the signaling cascade. The phosphate group is then transferred to PdtaR. Its function is as follows. In addition, the PdtaR/PdtaS two-component system controls copper and nitric oxide (NO) resistance downstream of the intramembrane protease Rip1. This coupled Rip1/PdtaS/PdtaR circuit controls NO resistance and acute lung infection in mice by relieving PdtaR/PdtaS-mediated repression of isonitrile chalkophore biosynthesis. Two signals are required to fully inactivate the PdtaR/PdtaS system and mediate NO resistance: a cytoplasmic inhibitory signal through the PdtaS kinase mediated by direct sensing of NO and the production of PPE1-5', an NO-induced small RNA, to sequester PdtaR. In Mycobacterium tuberculosis (strain CDC 1551 / Oshkosh), this protein is Sensor histidine kinase PdtaS (pdtaS).